A 208-amino-acid chain; its full sequence is Thymidylate kinase (208 aa).

ATP is bound at residue 11 to 18 (GGEGVGKS).

The protein belongs to the thymidylate kinase family.

It catalyses the reaction dTMP + ATP = dTDP + ADP. Phosphorylation of dTMP to form dTDP in both de novo and salvage pathways of dTTP synthesis. The chain is Thymidylate kinase from Methylococcus capsulatus (strain ATCC 33009 / NCIMB 11132 / Bath).